An 855-amino-acid polypeptide reads, in one-letter code: MSEGKQQFKDSNKPHKDSTDQDDDAATIVPQTLTYSRNEGHFLGSNFHGVTDDRTTLFDGEEGRREDDLLPSLRSSNSKAHLISSQLSQWNYNNNRVLLKRSILKTQAFMDQLQEENNIRPIFIAANDEREKLHVLQLNIKLDGQYNTKEKNGFNIEKKALSKLFHSQIVSVTNHLNALKKRVDDVSSKVFITGDVNTGKSALCNSLLKQRLLPEDQLPCTNVFSEILEARENDGIEEVHAIPLNIAPTLKEAIDMYSIQNPKTYEIHTLKELPDLVPQNGKYALLKIYIKDDKRPASTSLLRNGTVDISLIDSPGLNMDSLQTAEVMSRQEEIDLVIFVVNAENQLTLSAKEFISLASREKKLMFFVVKKFDKIRDKQRCKELILKQIRDLSPETYKRAADFVHFVSKNGDELPHYHNENDNEDHGDRKPDDDPYSSSDPDPDFDSLEDSLRNFVLKKRSLSKLLPAKTYLSKLLSDIIMISKSNMKMYSEEEIKINEQLETLRPEILSARAKCNDLTTSVDQMAEQTITMTYNNTKEALLNALDVPLHEYPKYQGLGQIYDFIFSTEAFIANQIDESIGSSELFAKQKTDLLVKKIYEIGKNELGDDFMCERVFRSELMFRKRKHLIGKRLKVSLSITDLFAPTWKGFLSYLSWQKPVTAPLPDIEGQTNEGQIGLMKYLGLKNYPLTQYWSRPSLLFTSKIPTLTLYFLGSTKVVGNIILNGIKLSSWSSLKKLSVPVIVVGSLLGLTYLIHDLPRALPMNLSIKYKRKLQELDYIHLNAQRTSNEVRDVLRVPTREILRSCEIIMDKKQITKKELENKKESNLLSIKFFQSLYEGTVAQKLMVEEINLDID.

The span at 1–19 shows a compositional bias: basic and acidic residues; the sequence is MSEGKQQFKDSNKPHKDST. The disordered stretch occupies residues 1–27; sequence MSEGKQQFKDSNKPHKDSTDQDDDAAT. Over 1–705 the chain is Cytoplasmic; sequence MSEGKQQFKD…PSLLFTSKIP (705 aa). The interval 91-190 is HRN; sequence NYNNNRVLLK…KRVDDVSSKV (100 aa). The region spanning 184–467 is the Dynamin-type G domain; it reads DDVSSKVFIT…KKRSLSKLLP (284 aa). Residues 197–202 and 370–373 each bind GTP; these read NTGKSA and KKFD. Lys398 participates in a covalent cross-link: Glycyl lysine isopeptide (Lys-Gly) (interchain with G-Cter in ubiquitin). Ser408 contributes to the GTP binding site. The segment covering 413 to 433 has biased composition (basic and acidic residues); sequence ELPHYHNENDNEDHGDRKPDD. The disordered stretch occupies residues 413–447; sequence ELPHYHNENDNEDHGDRKPDDDPYSSSDPDPDFDS. Residue Lys464 forms a Glycyl lysine isopeptide (Lys-Gly) (interchain with G-Cter in ubiquitin) linkage. The segment at 484–547 is HR1; sequence KSNMKMYSEE…KEALLNALDV (64 aa). The segment at 630–843 is required for interaction with UGO1; that stretch reads GKRLKVSLSI…QSLYEGTVAQ (214 aa). Residues 706-726 form a helical membrane-spanning segment; it reads TLTLYFLGSTKVVGNIILNGI. Residues 727-736 lie on the Mitochondrial intermembrane side of the membrane; it reads KLSSWSSLKK. A helical membrane pass occupies residues 737 to 757; the sequence is LSVPVIVVGSLLGLTYLIHDL. The Cytoplasmic portion of the chain corresponds to 758-855; sequence PRALPMNLSI…MVEEINLDID (98 aa). The HR2 stretch occupies residues 769 to 831; sequence YKRKLQELDY…KKESNLLSIK (63 aa). The stretch at 798-825 forms a coiled coil; that stretch reads TREILRSCEIIMDKKQITKKELENKKES.

Belongs to the TRAFAC class dynamin-like GTPase superfamily. Dynamin/Fzo/YdjA family. Mitofusin subfamily. Homodimer. Dimerization depends on GTP binding. Component of a large multiprotein complex of 800 kDa. Binds the cytoplasmic domain of UGO1 which binds MGM1 through its intermembrane space domain. Interacts with MDM30. Interacts with UBP2 and UBP12. Interacts (when ubiquitinated) with DOA1; the interaction recruits FZO1 to CDC48 and promotes FZO1 proteasomal degradation. In terms of processing, ubiquitinated at Lys-398 and Lys-464. MDM30 and UGO1 are involved in ubiquitination. Deubiquitinated by UBP2 and UBP12. UBP2 and UBP12 recognize distinct ubiquitin chains on FZO1 that have opposing effects on mitochondrial fusion. UBP2 removes ubiquitin chains that initiate proteolysis of FZO1 and inhibit fusion. UBP12 recognizes ubiquitin chains that stabilize FZO1 and promote mitochondrial fusion. UBP12 deubiquitylates FZO1 only after oligomerization.

It localises to the mitochondrion outer membrane. The enzyme catalyses GTP + H2O = GDP + phosphate + H(+). Its function is as follows. Essential transmembrane GTPase, which mediates mitochondrial fusion. Fusion proceeds through several steps; first mitochondria are tethered together, then brought into close contact, followed by the formation of a docking ring around contact areas, and finally membrane fusion. Fusion of mitochondria occurs in many cell types and constitutes an important step in mitochondrial morphology, which is balanced between fusion and fission, mediated by FZO1 and DNM1, respectively. Functions antagonistically with DNM1. Probably acts by forming membrane contact sites that mediate mitochondrial membrane fusion. Mitochondrial docking and fusion requires GTP hydrolysis. Mitochondrial fusion also promotes increased lifespan. The polypeptide is Mitofusin FZO1 (FZO1) (Saccharomyces cerevisiae (strain ATCC 204508 / S288c) (Baker's yeast)).